Here is a 173-residue protein sequence, read N- to C-terminus: Alpha-crystallin A chain (173 aa).

Position 1 is an N-acetylmethionine (M1). Residues 1-63 (MDIAIQHPWF…RTVLDSGISE (63 aa)) form a required for complex formation with BFSP1 and BFSP2 region. Q6 carries the post-translational modification Deamidated glutamine; partial. Phosphoserine is present on S45. Residue Q50 is modified to Deamidated glutamine; partial. The region spanning 52 to 162 (LFRTVLDSGI…GHSERAIPVS (111 aa)) is the sHSP domain. K70 carries the N6-acetyllysine modification. Q90 carries the deamidated glutamine; partial modification. Position 99 is an N6-acetyllysine (K99). Residue H100 participates in Zn(2+) binding. N101 carries the post-translational modification Deamidated asparagine; partial. Residues E102 and H107 each coordinate Zn(2+). S122 is modified (phosphoserine). Residue N123 is modified to Deamidated asparagine; partial. Residues 144–173 (PKIPSGVDAGHSERAIPVSREEKPSSAPSS) are disordered. A compositionally biased stretch (basic and acidic residues) spans 153 to 167 (GHSERAIPVSREEKP). H154 contributes to the Zn(2+) binding site. O-linked (GlcNAc) serine glycosylation occurs at S162.

The protein belongs to the small heat shock protein (HSP20) family. Heteromer composed of three CRYAA and one CRYAB subunits. Inter-subunit bridging via zinc ions enhances stability, which is crucial as there is no protein turn over in the lens. Can also form homodimers and homotetramers (dimers of dimers) which serve as the building blocks of homooligomers. Within homooligomers, the zinc-binding motif is created from residues of 3 different molecules. His-100 and Glu-102 from one molecule are ligands of the zinc ion, and His-107 and His-154 residues from additional molecules complete the site with tetrahedral coordination geometry. Part of a complex required for lens intermediate filament formation composed of BFSP1, BFSP2 and CRYAA. Acetylation at Lys-70 may increase chaperone activity. Post-translationally, undergoes age-dependent proteolytical cleavage at the C-terminus.

Its subcellular location is the cytoplasm. The protein localises to the nucleus. Functionally, contributes to the transparency and refractive index of the lens. Acts as a chaperone, preventing aggregation of various proteins under a wide range of stress conditions. Required for the correct formation of lens intermediate filaments as part of a complex composed of BFSP1, BFSP2 and CRYAA. The polypeptide is Alpha-crystallin A chain (CRYAA) (Giraffa camelopardalis (Giraffe)).